Consider the following 144-residue polypeptide: MKKLELNTEEIMKILPHRYPFLLVDRIIELLPGERAVGIKNLSVNEPFFPGHFPGHPVMPGVLMIEAMAQVGACAILCDEKYQGRLGYLAGVDRIRFKRMAVPGDSLLITTEFTAIKGNIGKGKGQIKINEEMVCGGEFLFALG.

His-52 is a catalytic residue.

The protein belongs to the thioester dehydratase family. FabZ subfamily.

Its subcellular location is the cytoplasm. It carries out the reaction a (3R)-hydroxyacyl-[ACP] = a (2E)-enoyl-[ACP] + H2O. Involved in unsaturated fatty acids biosynthesis. Catalyzes the dehydration of short chain beta-hydroxyacyl-ACPs and long chain saturated and unsaturated beta-hydroxyacyl-ACPs. This is 3-hydroxyacyl-[acyl-carrier-protein] dehydratase FabZ from Syntrophomonas wolfei subsp. wolfei (strain DSM 2245B / Goettingen).